Consider the following 100-residue polypeptide: NAD(P)H-quinone oxidoreductase subunit 4L, chloroplastic (100 aa).

The next 3 membrane-spanning stretches (helical) occupy residues 1–21 (MLEHALILGAYLFSIGIYGLV), 31–51 (MCLELILNAVNLNLVTFSNFF), and 63–83 (IFVIAIAAAEAAIGLAIVLAI).

Belongs to the complex I subunit 4L family. As to quaternary structure, NDH is composed of at least 16 different subunits, 5 of which are encoded in the nucleus.

It is found in the plastid. The protein localises to the chloroplast thylakoid membrane. The catalysed reaction is a plastoquinone + NADH + (n+1) H(+)(in) = a plastoquinol + NAD(+) + n H(+)(out). The enzyme catalyses a plastoquinone + NADPH + (n+1) H(+)(in) = a plastoquinol + NADP(+) + n H(+)(out). Its function is as follows. NDH shuttles electrons from NAD(P)H:plastoquinone, via FMN and iron-sulfur (Fe-S) centers, to quinones in the photosynthetic chain and possibly in a chloroplast respiratory chain. The immediate electron acceptor for the enzyme in this species is believed to be plastoquinone. Couples the redox reaction to proton translocation, and thus conserves the redox energy in a proton gradient. In Cryptomeria japonica (Japanese cedar), this protein is NAD(P)H-quinone oxidoreductase subunit 4L, chloroplastic.